The following is a 950-amino-acid chain: Oxysterol-binding protein-related protein 1 (950 aa).

Positions 1–237 (MNTEAEQQLL…NKVVHKALKR (237 aa)) are interaction with RAB7A. ANK repeat units lie at residues 47–76 (LGWT…KVNM), 80–109 (MGDT…DSTV), and 175–204 (LGNT…DPSL). One can recognise a PH domain in the interval 235–334 (LKRYEGPLWK…WLEAIEEHSA (100 aa)). Residues 430 to 463 (NFKLEQEQEKNKILSEALETLATEHHELERSLVE) adopt a coiled-coil conformation. The FFAT motif lies at 469-483 (SILSEEEFYDALSGS). Position 499 is a phosphoserine (serine 499). 2 disordered regions span residues 502 to 530 (ENEV…SNGI) and 795 to 821 (KKNT…VPDS). Positions 879 to 913 (RAMENGEIDLASEEKKRLEEKQRAARKNRSKSEED) form a coiled coil.

The protein belongs to the OSBP family. In terms of assembly, interacts (via FFAT motif) with VAPA and VAPB. Interacts with the GTP-bound form of RAB7A. Interacts with OAS1B. Interacts (via FFAT motif) with MOSPD2 (via MSP domain). In terms of tissue distribution, ubiquitous.

It is found in the late endosome. Its function is as follows. Binds phospholipids; exhibits strong binding to phosphatidic acid and weak binding to phosphatidylinositol 3-phosphate. Stabilizes GTP-bound RAB7A on late endosomes/lysosomes and alters functional properties of late endocytic compartments via its interaction with RAB7A. Binds 25-hydroxycholesterol and cholesterol. This is Oxysterol-binding protein-related protein 1 from Mus musculus (Mouse).